Here is a 210-residue protein sequence, read N- to C-terminus: Ribosomal RNA large subunit methyltransferase E (210 aa).

5 residues coordinate S-adenosyl-L-methionine: glycine 61, tryptophan 63, aspartate 81, aspartate 97, and aspartate 122. Lysine 162 acts as the Proton acceptor in catalysis.

Belongs to the class I-like SAM-binding methyltransferase superfamily. RNA methyltransferase RlmE family.

Its subcellular location is the cytoplasm. The enzyme catalyses uridine(2552) in 23S rRNA + S-adenosyl-L-methionine = 2'-O-methyluridine(2552) in 23S rRNA + S-adenosyl-L-homocysteine + H(+). In terms of biological role, specifically methylates the uridine in position 2552 of 23S rRNA at the 2'-O position of the ribose in the fully assembled 50S ribosomal subunit. This is Ribosomal RNA large subunit methyltransferase E from Xanthomonas oryzae pv. oryzae (strain MAFF 311018).